The following is a 145-amino-acid chain: Transcription antitermination protein NusB (145 aa).

It belongs to the NusB family.

Functionally, involved in transcription antitermination. Required for transcription of ribosomal RNA (rRNA) genes. Binds specifically to the boxA antiterminator sequence of the ribosomal RNA (rrn) operons. The chain is Transcription antitermination protein NusB from Burkholderia vietnamiensis (strain G4 / LMG 22486) (Burkholderia cepacia (strain R1808)).